We begin with the raw amino-acid sequence, 407 residues long: Tryptophan synthase beta chain (407 aa).

K91 is modified (N6-(pyridoxal phosphate)lysine).

It belongs to the TrpB family. In terms of assembly, tetramer of two alpha and two beta chains. Requires pyridoxal 5'-phosphate as cofactor.

The catalysed reaction is (1S,2R)-1-C-(indol-3-yl)glycerol 3-phosphate + L-serine = D-glyceraldehyde 3-phosphate + L-tryptophan + H2O. The protein operates within amino-acid biosynthesis; L-tryptophan biosynthesis; L-tryptophan from chorismate: step 5/5. In terms of biological role, the beta subunit is responsible for the synthesis of L-tryptophan from indole and L-serine. This is Tryptophan synthase beta chain from Streptococcus pneumoniae serotype 2 (strain D39 / NCTC 7466).